The sequence spans 251 residues: tRNA-cytidine(32) 2-sulfurtransferase 2 (251 aa).

Residues 33–38 (SGGKDS) carry the PP-loop motif motif. Residues cysteine 108, cysteine 111, and cysteine 199 each coordinate [4Fe-4S] cluster.

The protein belongs to the TtcA family. Homodimer. Mg(2+) is required as a cofactor. The cofactor is [4Fe-4S] cluster.

It is found in the cytoplasm. It catalyses the reaction cytidine(32) in tRNA + S-sulfanyl-L-cysteinyl-[cysteine desulfurase] + AH2 + ATP = 2-thiocytidine(32) in tRNA + L-cysteinyl-[cysteine desulfurase] + A + AMP + diphosphate + H(+). It participates in tRNA modification. Its function is as follows. Catalyzes the ATP-dependent 2-thiolation of cytidine in position 32 of tRNA, to form 2-thiocytidine (s(2)C32). The sulfur atoms are provided by the cysteine/cysteine desulfurase (IscS) system. In Francisella tularensis subsp. tularensis (strain WY96-3418), this protein is tRNA-cytidine(32) 2-sulfurtransferase 2.